Reading from the N-terminus, the 171-residue chain is Shikimate kinase (171 aa).

ATP is bound at residue 11-16; the sequence is GTGKTT. Thr15 is a Mg(2+) binding site. Positions 33, 57, and 79 each coordinate substrate. An ATP-binding site is contributed by Arg117. Arg136 serves as a coordination point for substrate.

Belongs to the shikimate kinase family. In terms of assembly, monomer. It depends on Mg(2+) as a cofactor.

The protein resides in the cytoplasm. The enzyme catalyses shikimate + ATP = 3-phosphoshikimate + ADP + H(+). It participates in metabolic intermediate biosynthesis; chorismate biosynthesis; chorismate from D-erythrose 4-phosphate and phosphoenolpyruvate: step 5/7. In terms of biological role, catalyzes the specific phosphorylation of the 3-hydroxyl group of shikimic acid using ATP as a cosubstrate. This Caldanaerobacter subterraneus subsp. tengcongensis (strain DSM 15242 / JCM 11007 / NBRC 100824 / MB4) (Thermoanaerobacter tengcongensis) protein is Shikimate kinase.